The following is a 397-amino-acid chain: Anhydro-N-acetylmuramic acid kinase (397 aa).

ATP is bound at residue 9–16 (GTSYDAID).

Belongs to the anhydro-N-acetylmuramic acid kinase family.

It catalyses the reaction 1,6-anhydro-N-acetyl-beta-muramate + ATP + H2O = N-acetyl-D-muramate 6-phosphate + ADP + H(+). The protein operates within amino-sugar metabolism; 1,6-anhydro-N-acetylmuramate degradation. Its pathway is cell wall biogenesis; peptidoglycan recycling. Functionally, catalyzes the specific phosphorylation of 1,6-anhydro-N-acetylmuramic acid (anhMurNAc) with the simultaneous cleavage of the 1,6-anhydro ring, generating MurNAc-6-P. Is required for the utilization of anhMurNAc either imported from the medium or derived from its own cell wall murein, and thus plays a role in cell wall recycling. The polypeptide is Anhydro-N-acetylmuramic acid kinase (Rhodococcus erythropolis (strain PR4 / NBRC 100887)).